Consider the following 347-residue polypeptide: Methylthioribose-1-phosphate isomerase (347 aa).

Residues 45–47 (RGA), Arg88, and Gln197 contribute to the substrate site. Asp238 (proton donor) is an active-site residue. Position 248 to 249 (248 to 249 (NK)) interacts with substrate.

It belongs to the eIF-2B alpha/beta/delta subunits family. MtnA subfamily.

The enzyme catalyses 5-(methylsulfanyl)-alpha-D-ribose 1-phosphate = 5-(methylsulfanyl)-D-ribulose 1-phosphate. It participates in amino-acid biosynthesis; L-methionine biosynthesis via salvage pathway; L-methionine from S-methyl-5-thio-alpha-D-ribose 1-phosphate: step 1/6. In terms of biological role, catalyzes the interconversion of methylthioribose-1-phosphate (MTR-1-P) into methylthioribulose-1-phosphate (MTRu-1-P). The protein is Methylthioribose-1-phosphate isomerase of Trichormus variabilis (strain ATCC 29413 / PCC 7937) (Anabaena variabilis).